Reading from the N-terminus, the 546-residue chain is Cysteine desulfurase SufS (546 aa).

The first 22 residues, 1–22 (MLRGPRCLYIYLFFVFLPFSFC), serve as a signal peptide directing secretion. N6-(pyridoxal phosphate)lysine is present on Lys-291. Cys-497 serves as the catalytic Cysteine persulfide intermediate.

Belongs to the class-V pyridoxal-phosphate-dependent aminotransferase family. Csd subfamily. As to quaternary structure, monomer. Interacts with SufE; interaction enhances cysteine desulfurase activity of SufS. It depends on pyridoxal 5'-phosphate as a cofactor. Proteolytically cleaved.

It is found in the plastid. It localises to the apicoplast. The enzyme catalyses (sulfur carrier)-H + L-cysteine = (sulfur carrier)-SH + L-alanine. It functions in the pathway cofactor biosynthesis; iron-sulfur cluster biosynthesis. Catalyzes sulfur activation and mobilization in sulfur mobilization (SUF) pathway for iron-sulfur (Fe-S) cluster biogenesis. Active when in complex with a partner protein SufE. Required for apicoplast maintenance. Plays a role in the development of sporozoites in oocysts in mosquitoes. May provide sulfur for MNMA-mediated tRNA modifications. The polypeptide is Cysteine desulfurase SufS (Plasmodium falciparum (isolate 3D7)).